Reading from the N-terminus, the 426-residue chain is Serine--tRNA ligase (426 aa).

L-serine is bound at residue 233-235 (TAE). 264 to 266 (RSE) is an ATP binding site. Glu287 lines the L-serine pocket. Residue 351–354 (EISS) coordinates ATP. Residue Ser387 participates in L-serine binding.

It belongs to the class-II aminoacyl-tRNA synthetase family. Type-1 seryl-tRNA synthetase subfamily. As to quaternary structure, homodimer. The tRNA molecule binds across the dimer.

The protein resides in the cytoplasm. It carries out the reaction tRNA(Ser) + L-serine + ATP = L-seryl-tRNA(Ser) + AMP + diphosphate + H(+). The enzyme catalyses tRNA(Sec) + L-serine + ATP = L-seryl-tRNA(Sec) + AMP + diphosphate + H(+). Its pathway is aminoacyl-tRNA biosynthesis; selenocysteinyl-tRNA(Sec) biosynthesis; L-seryl-tRNA(Sec) from L-serine and tRNA(Sec): step 1/1. Functionally, catalyzes the attachment of serine to tRNA(Ser). Is also able to aminoacylate tRNA(Sec) with serine, to form the misacylated tRNA L-seryl-tRNA(Sec), which will be further converted into selenocysteinyl-tRNA(Sec). In Azotobacter vinelandii (strain DJ / ATCC BAA-1303), this protein is Serine--tRNA ligase.